A 274-amino-acid polypeptide reads, in one-letter code: 2,3,4,5-tetrahydropyridine-2,6-dicarboxylate N-succinyltransferase (274 aa).

Belongs to the transferase hexapeptide repeat family.

It is found in the cytoplasm. The catalysed reaction is (S)-2,3,4,5-tetrahydrodipicolinate + succinyl-CoA + H2O = (S)-2-succinylamino-6-oxoheptanedioate + CoA. It functions in the pathway amino-acid biosynthesis; L-lysine biosynthesis via DAP pathway; LL-2,6-diaminopimelate from (S)-tetrahydrodipicolinate (succinylase route): step 1/3. This is 2,3,4,5-tetrahydropyridine-2,6-dicarboxylate N-succinyltransferase from Yersinia pseudotuberculosis serotype IB (strain PB1/+).